Reading from the N-terminus, the 247-residue chain is DNA repair protein RecO (247 aa).

It belongs to the RecO family.

Involved in DNA repair and RecF pathway recombination. This is DNA repair protein RecO from Brucella abortus (strain 2308).